A 445-amino-acid polypeptide reads, in one-letter code: 6-phosphogluconate dehydrogenase, decarboxylating (445 aa).

Residues 1 to 4 (AVMG), 22 to 24 (NRS), 63 to 65 (VKA), and Asn-91 contribute to the NADP(+) site. Residues Asn-91 and 117–119 (SGG) each bind substrate. The active-site Proton acceptor is the Lys-172. 175-176 (HN) serves as a coordination point for substrate. Residue Glu-179 is the Proton donor of the active site. Substrate contacts are provided by Tyr-180, Lys-249, Arg-276, Arg-434, and His-440.

The protein belongs to the 6-phosphogluconate dehydrogenase family. As to quaternary structure, homodimer.

The catalysed reaction is 6-phospho-D-gluconate + NADP(+) = D-ribulose 5-phosphate + CO2 + NADPH. It participates in carbohydrate degradation; pentose phosphate pathway; D-ribulose 5-phosphate from D-glucose 6-phosphate (oxidative stage): step 3/3. Catalyzes the oxidative decarboxylation of 6-phosphogluconate to ribulose 5-phosphate and CO(2), with concomitant reduction of NADP to NADPH. The protein is 6-phosphogluconate dehydrogenase, decarboxylating (gnd) of Raoultella terrigena (Klebsiella terrigena).